The sequence spans 316 residues: Melanocyte-stimulating hormone receptor (316 aa).

Topologically, residues 1–37 (MPMQGAHRKLLGSLNSTPTATSNLGLAANHTGAPCLE) are extracellular. N-linked (GlcNAc...) asparagine glycosylation is present at N29. A helical membrane pass occupies residues 38–63 (VSIPDGLFLSLGLVSLVENVLVVAAI). The Cytoplasmic segment spans residues 64–72 (AKNRNLHSS). The chain crosses the membrane as a helical span at residues 73–93 (MYCFICCLALSDLLVSGSNML). The Extracellular segment spans residues 94-118 (ETAVILLLEAGALATRTSVVQQLHN). The helical transmembrane segment at 119–140 (TIDVLTCSSMLCSLCFLGAIAV) threads the bilayer. Over 141–163 (DRYISIFYALRYHSIMTLPRAQR) the chain is Cytoplasmic. Residues 164-183 (AIAAIWVASVLSSTLFITYY) traverse the membrane as a helical segment. At 184–191 (DHAAVLLC) the chain is on the extracellular side. Residues 192 to 211 (LVVFFLAMLVLMAVLYVHML) form a helical membrane-spanning segment. The Cytoplasmic segment spans residues 212 to 240 (ARACQHAHGIIRLHKRQSPAHQGFGLRGA). The helical transmembrane segment at 241–266 (ATLTILLGIFFLCWGPFFLHLTLVVF) threads the bilayer. Residues 267-279 (CPQHLTCSCIFKN) lie on the Extracellular side of the membrane. Residues 280-300 (FKVFLTLIICNTIIDPLIYAF) form a helical membrane-spanning segment. Residues 301–316 (RSQELRRTLKEVLCSW) are Cytoplasmic-facing. A lipid anchor (S-palmitoyl cysteine) is attached at C314.

Belongs to the G-protein coupled receptor 1 family. In terms of assembly, interacts with MGRN1, but does not undergo MGRN1-mediated ubiquitination; this interaction competes with GNAS-binding and thus inhibits agonist-induced cAMP production. Interacts with OPN3; the interaction results in a decrease in MC1R-mediated cAMP signaling and ultimately a decrease in melanin production in melanocytes.

The protein localises to the cell membrane. Functionally, receptor for MSH (alpha, beta and gamma) and ACTH. The activity of this receptor is mediated by G proteins which activate adenylate cyclase. Mediates melanogenesis, the production of eumelanin (black/brown) and phaeomelanin (red/yellow), via regulation of cAMP signaling in melanocytes. This chain is Melanocyte-stimulating hormone receptor (MC1R), found in Leontocebus fuscicollis (Brown-mantled tamarin).